We begin with the raw amino-acid sequence, 647 residues long: Type II methyltransferase M.FokI (647 aa).

Short sequence motifs (adenine-specific methylase) lie at residues 218-221 (DPPY) and 548-551 (DPPY).

The protein belongs to the N(4)/N(6)-methyltransferase family. As to quaternary structure, monomer.

The enzyme catalyses a 2'-deoxyadenosine in DNA + S-adenosyl-L-methionine = an N(6)-methyl-2'-deoxyadenosine in DNA + S-adenosyl-L-homocysteine + H(+). Its function is as follows. An alpha subtype methylase that recognizes the asymmetric double-stranded sequence 5'-GGATG-3', methylates A-3 of both strands, and protects the DNA from cleavage by the FokI endonuclease. The chain is Type II methyltransferase M.FokI from Planomicrobium okeanokoites (Planococcus okeanokoites).